The primary structure comprises 212 residues: ATP-dependent dethiobiotin synthetase BioD (212 aa).

13–18 (GIGKTV) lines the ATP pocket. Thr17 lines the Mg(2+) pocket. Lys33 is an active-site residue. Ser37 provides a ligand contact to substrate. Residue Glu100 participates in Mg(2+) binding. ATP-binding positions include 100-103 (EGAG) and 184-186 (PRL).

The protein belongs to the dethiobiotin synthetase family. In terms of assembly, homodimer. The cofactor is Mg(2+).

The protein localises to the cytoplasm. The enzyme catalyses (7R,8S)-7,8-diammoniononanoate + CO2 + ATP = (4R,5S)-dethiobiotin + ADP + phosphate + 3 H(+). Its pathway is cofactor biosynthesis; biotin biosynthesis; biotin from 7,8-diaminononanoate: step 1/2. Functionally, catalyzes a mechanistically unusual reaction, the ATP-dependent insertion of CO2 between the N7 and N8 nitrogen atoms of 7,8-diaminopelargonic acid (DAPA, also called 7,8-diammoniononanoate) to form a ureido ring. This is ATP-dependent dethiobiotin synthetase BioD from Rhodopseudomonas palustris (strain TIE-1).